Reading from the N-terminus, the 96-residue chain is UPF0235 protein Ent638_3359 (96 aa).

Belongs to the UPF0235 family.

This Enterobacter sp. (strain 638) protein is UPF0235 protein Ent638_3359.